Consider the following 1149-residue polypeptide: DNA-directed RNA polymerase III subunit RPC2 (1149 aa).

Residues C1095, C1098, C1107, and C1110 each coordinate Zn(2+). The C4-type zinc finger occupies 1095–1110 (CDKCGLMGYSGWCTTC).

This sequence belongs to the RNA polymerase beta chain family. Component of the RNA polymerase III (Pol III) complex consisting of 17 subunits.

It localises to the nucleus. It catalyses the reaction RNA(n) + a ribonucleoside 5'-triphosphate = RNA(n+1) + diphosphate. DNA-dependent RNA polymerase catalyzes the transcription of DNA into RNA using the four ribonucleoside triphosphates as substrates. Second largest core component of RNA polymerase III which synthesizes small RNAs, such as 5S rRNA and tRNAs. Proposed to contribute to the polymerase catalytic activity and forms the polymerase active center together with the largest subunit. Pol III is composed of mobile elements and RPC2 is part of the core element with the central large cleft and probably a clamp element that moves to open and close the cleft. The sequence is that of DNA-directed RNA polymerase III subunit RPC2 (RET1) from Saccharomyces cerevisiae (strain ATCC 204508 / S288c) (Baker's yeast).